The following is a 265-amino-acid chain: MIDLFSPKGKKDTVSTTNKDKSFEDGIVNIINKIKAGDKLLREEFINSYTPYIIRTVSNLTGKYVDVENSDEFSVGLAAFNEAIDSFDEGKNMFFFKFSTLVIKRRLTDYARHNKKHCHVYPFTYFEDKNNSYFEQIHLKSEIDLQNTYEISREIELYEQKLRDFGISLEHLAKCAPKHKDSKSLCIKIAKVIADNKELFSKLERTRNIPKTELLKLLKINKKTIERNRTFIIAAALIFGNDFNLLKDFLDISEPGGDNIERSTK.

Residues 71 to 84 carry the Polymerase core binding motif; sequence DEFSVGLAAFNEAI. Residues 211 to 230 constitute a DNA-binding region (H-T-H motif); it reads KTELLKLLKINKKTIERNRT.

It belongs to the sigma-70 factor family. SigI subfamily. In terms of assembly, interacts with RsgI2.

Its subcellular location is the cytoplasm. With respect to regulation, negatively regulated by the anti-sigma-I factor RsgI2. Binding of the polysaccharide substrate to RsgI2 may lead to the release and activation of SigI2. Functionally, sigma factors are initiation factors that promote the attachment of RNA polymerase to specific initiation sites and are then released. This sigma factor is involved in regulation of cellulosomal genes via an external polysaccharide-sensing mechanism. The chain is RNA polymerase sigma factor SigI2 from Acetivibrio thermocellus (strain ATCC 27405 / DSM 1237 / JCM 9322 / NBRC 103400 / NCIMB 10682 / NRRL B-4536 / VPI 7372) (Clostridium thermocellum).